A 140-amino-acid chain; its full sequence is Oocyte-expressed protein homolog (140 aa).

In terms of domain architecture, KH; atypical spans 40-101 (PLVFFLEAWL…AVQRQVKSVL (62 aa)).

Belongs to the KHDC1 family. As to quaternary structure, component of the subcortical maternal complex (SCMC), at least composed of NLRP5, KHDC3, OOEP, and TLE6. Within the complex, interacts with NLRP5, KHDC3 and TLE6. As part of the SCMC interacts with the SCMC-associated protein NLRP4F. The SCMC may facilitate translocation of its components between the nuclear and cytoplasmic compartments. Forms a scaffold complex with KHDC3/FILIA, and interacts with BLM and TRIM25 at DNA replication forks.

The protein resides in the cytoplasm. The protein localises to the nucleus. Component of the subcortical maternal complex (SCMC), a multiprotein complex that plays a key role in early embryonic development. The SCMC complex is a structural constituent of cytoplasmic lattices, which consist in fibrous structures found in the cytoplasm of oocytes and preimplantation embryos. They are required to store maternal proteins critical for embryonic development, such as proteins that control epigenetic reprogramming of the preimplantation embryo, and prevent their degradation or activation. As part of the OOEP-KHDC3 scaffold, recruits BLM and TRIM25 to DNA replication forks, thereby promoting the ubiquitination of BLM by TRIM25, enhancing BLM retainment at replication forks and therefore promoting stalled replication fork restart. Positively regulates the homologous recombination-mediated DNA double-strand break (DSB) repair pathway by regulating ATM activation and RAD51 recruitment to DSBs in oocytes. Thereby contributes to oocyte survival and the resumption and completion of meiosis. The sequence is that of Oocyte-expressed protein homolog (OOEP) from Bos taurus (Bovine).